Here is a 287-residue protein sequence, read N- to C-terminus: 4-hydroxybenzoate octaprenyltransferase (287 aa).

Helical transmembrane passes span 41 to 61 (WPLI…GCAM), 89 to 109 (WEAV…ILPL), 133 to 153 (FFAI…PMAF), 158 to 178 (NTVP…SIAY), 218 to 238 (LGIY…WVGW), and 267 to 287 (NNWL…MAGS).

Belongs to the UbiA prenyltransferase family. The cofactor is Mg(2+).

It is found in the cell inner membrane. The catalysed reaction is all-trans-octaprenyl diphosphate + 4-hydroxybenzoate = 4-hydroxy-3-(all-trans-octaprenyl)benzoate + diphosphate. Its pathway is cofactor biosynthesis; ubiquinone biosynthesis. Functionally, catalyzes the prenylation of para-hydroxybenzoate (PHB) with an all-trans polyprenyl group. Mediates the second step in the final reaction sequence of ubiquinone-8 (UQ-8) biosynthesis, which is the condensation of the polyisoprenoid side chain with PHB, generating the first membrane-bound Q intermediate 3-octaprenyl-4-hydroxybenzoate. This is 4-hydroxybenzoate octaprenyltransferase from Burkholderia multivorans (strain ATCC 17616 / 249).